Here is a 306-residue protein sequence, read N- to C-terminus: Serrate RNA effector molecule homolog (306 aa).

Residues 1–28 (HKEEELLGSSGGPPPEEPPKEGNPAEIN) are disordered. T101 bears the Phosphothreonine mark. S109 is subject to Phosphoserine. A disordered region spans residues 251 to 284 (GPPYPHGPYGAGRGNYDAFRGQGGYPGKPRNRMV). Omega-N-methylarginine occurs at positions 263, 270, and 280.

It belongs to the ARS2 family. Interacts with CASP8AP2, ERBB4, NCBP1/CBP80 and DROSHA. Interacts with LUZP4. Interacts with NCBP2/CBP20 and NCBP3.

The protein localises to the nucleus. The protein resides in the nucleoplasm. Its subcellular location is the cytoplasm. Its function is as follows. Acts as a mediator between the cap-binding complex (CBC) and the primary microRNAs (miRNAs) processing machinery during cell proliferation. Contributes to the stability and delivery of capped primary miRNA transcripts to the primary miRNA processing complex containing DGCR8 and DROSHA, thereby playing a role in RNA-mediated gene silencing (RNAi) by miRNAs. Binds capped RNAs (m7GpppG-capped RNA); however interaction is probably mediated via its interaction with NCBP1/CBP80 component of the CBC complex. Involved in cell cycle progression at S phase. Does not directly confer arsenite resistance but rather modulates arsenic sensitivity. Independently of its activity on miRNAs, necessary and sufficient to promote neural stem cell self-renewal. Does so by directly binding SOX2 promoter and positively regulating its transcription. The chain is Serrate RNA effector molecule homolog (SRRT) from Cricetulus griseus (Chinese hamster).